We begin with the raw amino-acid sequence, 158 residues long: Cyclic pyranopterin monophosphate synthase (158 aa).

Substrate is bound by residues 74 to 76 (MCH) and 112 to 113 (ME). Aspartate 127 is a catalytic residue.

Belongs to the MoaC family. As to quaternary structure, homohexamer; trimer of dimers.

The enzyme catalyses (8S)-3',8-cyclo-7,8-dihydroguanosine 5'-triphosphate = cyclic pyranopterin phosphate + diphosphate. The protein operates within cofactor biosynthesis; molybdopterin biosynthesis. Its function is as follows. Catalyzes the conversion of (8S)-3',8-cyclo-7,8-dihydroguanosine 5'-triphosphate to cyclic pyranopterin monophosphate (cPMP). The protein is Cyclic pyranopterin monophosphate synthase of Thermoanaerobacter pseudethanolicus (strain ATCC 33223 / 39E) (Clostridium thermohydrosulfuricum).